The chain runs to 429 residues: ATP-dependent RNA helicase RhlB (429 aa).

The short motif at Asp9–Ala37 is the Q motif element. Positions Leu40–Val219 constitute a Helicase ATP-binding domain. Ala53 to Thr60 contacts ATP. A DEAD box motif is present at residues Asp165–Asp168. Residues Lys243–Leu390 form the Helicase C-terminal domain. Residues Val399–Ser429 form a disordered region.

This sequence belongs to the DEAD box helicase family. RhlB subfamily. Component of the RNA degradosome, which is a multiprotein complex involved in RNA processing and mRNA degradation.

The protein localises to the cytoplasm. It carries out the reaction ATP + H2O = ADP + phosphate + H(+). Functionally, DEAD-box RNA helicase involved in RNA degradation. Has RNA-dependent ATPase activity and unwinds double-stranded RNA. The chain is ATP-dependent RNA helicase RhlB from Aeromonas hydrophila subsp. hydrophila (strain ATCC 7966 / DSM 30187 / BCRC 13018 / CCUG 14551 / JCM 1027 / KCTC 2358 / NCIMB 9240 / NCTC 8049).